A 121-amino-acid chain; its full sequence is Cu-Zn superoxide dismutase-like protein (121 aa).

Cysteines 48 and 98 form a disulfide.

Belongs to the Cu-Zn superoxide dismutase family.

Its subcellular location is the host cytoplasm. In terms of biological role, virion protein with no enzymatic activity. The protein is Cu-Zn superoxide dismutase-like protein of Vaccinia virus (strain Ankara) (VACV).